The chain runs to 426 residues: Serine--tRNA ligase (426 aa).

229-231 (TAE) provides a ligand contact to L-serine. An ATP-binding site is contributed by 260-262 (RSE). Glu283 serves as a coordination point for L-serine. Residue 347 to 350 (EIAS) coordinates ATP. Ser383 lines the L-serine pocket.

It belongs to the class-II aminoacyl-tRNA synthetase family. Type-1 seryl-tRNA synthetase subfamily. In terms of assembly, homodimer. The tRNA molecule binds across the dimer.

It is found in the cytoplasm. The catalysed reaction is tRNA(Ser) + L-serine + ATP = L-seryl-tRNA(Ser) + AMP + diphosphate + H(+). It catalyses the reaction tRNA(Sec) + L-serine + ATP = L-seryl-tRNA(Sec) + AMP + diphosphate + H(+). The protein operates within aminoacyl-tRNA biosynthesis; selenocysteinyl-tRNA(Sec) biosynthesis; L-seryl-tRNA(Sec) from L-serine and tRNA(Sec): step 1/1. Catalyzes the attachment of serine to tRNA(Ser). Is also able to aminoacylate tRNA(Sec) with serine, to form the misacylated tRNA L-seryl-tRNA(Sec), which will be further converted into selenocysteinyl-tRNA(Sec). The chain is Serine--tRNA ligase from Rickettsia bellii (strain RML369-C).